A 199-amino-acid chain; its full sequence is NADH-quinone oxidoreductase subunit C (199 aa).

Belongs to the complex I 30 kDa subunit family. As to quaternary structure, NDH-1 is composed of 14 different subunits. Subunits NuoB, C, D, E, F, and G constitute the peripheral sector of the complex.

It localises to the cell inner membrane. The catalysed reaction is a quinone + NADH + 5 H(+)(in) = a quinol + NAD(+) + 4 H(+)(out). Its function is as follows. NDH-1 shuttles electrons from NADH, via FMN and iron-sulfur (Fe-S) centers, to quinones in the respiratory chain. The immediate electron acceptor for the enzyme in this species is believed to be ubiquinone. Couples the redox reaction to proton translocation (for every two electrons transferred, four hydrogen ions are translocated across the cytoplasmic membrane), and thus conserves the redox energy in a proton gradient. The sequence is that of NADH-quinone oxidoreductase subunit C from Polynucleobacter necessarius subsp. necessarius (strain STIR1).